A 228-amino-acid chain; its full sequence is MYSIVAEESGLLPRERLLQKGAEVLSDQELLAIVLRTGTKSESVLSMANRILKGMTSLADLSRLSLNELQEIPGIGRVKSIELKAMVELAKRIEKAELARSEQIMSSQQVARRMMLDIGDKPQEHLVAIYLDTQNRIIQQKTVFIGGVRRSIAEPREILYYACHLMATSLIVVHNHPSGEAYPSRNDIDFTQKIKRSCDDLGICLLDHLIVGKSTYYSFREEREDFEL.

In terms of domain architecture, MPN spans 103 to 225 (QIMSSQQVAR…YYSFREERED (123 aa)). His174, His176, and Asp187 together coordinate Zn(2+). The JAMM motif signature appears at 174 to 187 (HNHPSGEAYPSRND).

This sequence belongs to the UPF0758 family.

This Streptococcus thermophilus (strain CNRZ 1066) protein is UPF0758 protein str1465.